The sequence spans 471 residues: Mannose-1-phosphate guanylyltransferase (471 aa).

It belongs to the mannose-6-phosphate isomerase type 2 family.

It catalyses the reaction alpha-D-mannose 1-phosphate + GTP + H(+) = GDP-alpha-D-mannose + diphosphate. Its pathway is nucleotide-sugar biosynthesis; GDP-alpha-D-mannose biosynthesis; GDP-alpha-D-mannose from alpha-D-mannose 1-phosphate (GTP route): step 1/1. Its function is as follows. Involved in GDP-mannose biosynthesis which serves as the activated sugar nucleotide precursor for mannose residues in cell surface polysaccharides. This enzyme participates in synthesis of the LPS O antigen. This is Mannose-1-phosphate guanylyltransferase (manC) from Salmonella montevideo.